The sequence spans 174 residues: uncharacterized protein (174 aa).

This is an uncharacterized protein from Rickettsia conorii (strain ATCC VR-613 / Malish 7).